The sequence spans 213 residues: Nucleoside triphosphate pyrophosphatase (213 aa).

Asp79 functions as the Proton acceptor in the catalytic mechanism.

This sequence belongs to the Maf family. Requires a divalent metal cation as cofactor.

It is found in the cytoplasm. It catalyses the reaction a ribonucleoside 5'-triphosphate + H2O = a ribonucleoside 5'-phosphate + diphosphate + H(+). The enzyme catalyses a 2'-deoxyribonucleoside 5'-triphosphate + H2O = a 2'-deoxyribonucleoside 5'-phosphate + diphosphate + H(+). Nucleoside triphosphate pyrophosphatase. May have a dual role in cell division arrest and in preventing the incorporation of modified nucleotides into cellular nucleic acids. In Rhodococcus erythropolis (strain PR4 / NBRC 100887), this protein is Nucleoside triphosphate pyrophosphatase.